Consider the following 468-residue polypeptide: Putative BTB/POZ domain and WD-repeat protein R154 (468 aa).

The BTB domain occupies 14–85 (SDLQLIVEDS…FYGIDDKLPE (72 aa)). WD repeat units lie at residues 194–233 (HHSE…IIFN), 354–398 (DEIG…LVKS), and 401–440 (LFDV…IIYT).

Belongs to the mimivirus BTB/WD family.

In Acanthamoeba polyphaga (Amoeba), this protein is Putative BTB/POZ domain and WD-repeat protein R154.